A 193-amino-acid chain; its full sequence is Large ribosomal subunit protein uL18 (193 aa).

The protein belongs to the universal ribosomal protein uL18 family. As to quaternary structure, part of the 50S ribosomal subunit. Contacts the 5S and 23S rRNAs.

In terms of biological role, this is one of the proteins that bind and probably mediate the attachment of the 5S RNA into the large ribosomal subunit, where it forms part of the central protuberance. The polypeptide is Large ribosomal subunit protein uL18 (Methanococcus maripaludis (strain C5 / ATCC BAA-1333)).